Reading from the N-terminus, the 373-residue chain is P2Y purinoceptor 1 (373 aa).

The Extracellular portion of the chain corresponds to 1-51 (MTEVLWPAVPNGTDAAFLAGPGSSWGNSTVASTAAVSSSFKCALTKTGFQF). 2 N-linked (GlcNAc...) asparagine glycosylation sites follow: Asn11 and Asn27. 2 cysteine pairs are disulfide-bonded: Cys42-Cys296 and Cys124-Cys202. Lys46 is a binding site for ADP. A helical transmembrane segment spans residues 52–74 (YYLPAVYILVFIIGFLGNSVAIW). Residues 75–87 (MFVFHMKPWSGIS) are Cytoplasmic-facing. A helical membrane pass occupies residues 88–109 (VYMFNLALADFLYVLTLPALIF). At 110–125 (YYFNKTDWIFGDAMCK) the chain is on the extracellular side. Asn113 carries an N-linked (GlcNAc...) asparagine glycan. The chain crosses the membrane as a helical span at residues 126 to 147 (LQRFIFHVNLYGSILFLTCISA). The Cytoplasmic portion of the chain corresponds to 148–166 (HRYSGVVYPLKSLGRLKKK). The chain crosses the membrane as a helical span at residues 167–188 (NAICISVLVWLIVVVAISPILF). The Extracellular segment spans residues 189–214 (YSGTGVRKNKTITCYDTTSDEYLRSY). The N-linked (GlcNAc...) asparagine glycan is linked to Asn197. 203–205 (YDT) is an ADP binding site. A helical membrane pass occupies residues 215–237 (FIYSMCTTVAMFCVPLVLILGCY). At 238–260 (GLIVRALIYKDLDNSPLRRKSIY) the chain is on the cytoplasmic side. A helical transmembrane segment spans residues 261-284 (LVIIVLTVFAVSYIPFHVMKTMNL). ADP contacts are provided by residues 283–287 (NLRAR), 303–306 (YATY), and Arg310. The Extracellular segment spans residues 285–303 (RARLDFQTPAMCAFNDRVY). The helical transmembrane segment at 304–325 (ATYQVTRGLASLNSCVDPILYF) threads the bilayer. The Cytoplasmic segment spans residues 326 to 373 (LAGDTFRRRLSRATRKASRRSEANLQSKSEDMTLNILPEFKQNGDTSL).

This sequence belongs to the G-protein coupled receptor 1 family.

The protein resides in the cell membrane. With respect to regulation, ATP functions as antagonist and inhibits ADP-induced mobilization of Ca(2+). The P2Y1 receptor-specific antagonists A3P5PS, A3P5P and A2P5P inhibit downstream signaling mediated by mobilization of Ca(2+) from intracellular stores, and platelet shape changes in response to extracellular ADP. Its function is as follows. Receptor for extracellular adenine nucleotides such as ADP. In platelets, binding to ADP leads to mobilization of intracellular calcium ions via activation of phospholipase C, a change in platelet shape, and ultimately platelet aggregation. This is P2Y purinoceptor 1 (P2RY1) from Homo sapiens (Human).